Here is a 430-residue protein sequence, read N- to C-terminus: MKKKPFYKVLYVQVIFAIIVGVILGHFYPSIATDMKPLGDGFIKLIKMVIGPIIFCTVVTGIAGMEDMKKVGRVGGKALLYFEIVSTFALLLGLAATHLLRPGVGFNIDPATLDGKAVASYAAKAHGQSTVDFLMHIIPNTMVDAFAQGEILQILLIALLFGSVLAHLGERGRVVTDFIDGLTRVLFGIVHIVTKLAPIGAFGAMAFTIGKYGVGSLVPLLKLIGTFYLTSVVFVLVVLGAIARFTGFSIIRFVSYIKEELLIVLGTSSSEAALPQLMEKLEKAGCSRSVVGLVVPTGYSFNLDGTNIYMTMAVLFIAQATNIELTWMQQLTLLAVAMLTSKGASGVTGAGFITLAATLAVVPTIPLSGMVLILGIDRFMSECRALTNIVGNGVATVVVSAWEKELDRNKLRQALKGGGEVAPTETTAGV.

Transmembrane regions (helical) follow at residues 9 to 29 (VLYV…HFYP), 45 to 65 (LIKM…IAGM), 79 to 99 (LLYF…ATHL), 149 to 169 (GEIL…AHLG), 185 to 205 (VLFG…FGAM), 223 to 243 (LIGT…GAIA), 308 to 328 (IYMT…LTWM), and 356 to 376 (AATL…ILGI).

The protein belongs to the dicarboxylate/amino acid:cation symporter (DAACS) (TC 2.A.23) family.

It localises to the cell inner membrane. Its function is as follows. Responsible for the transport of dicarboxylates such as succinate, fumarate, and malate from the periplasm across the membrane. The sequence is that of C4-dicarboxylate transport protein from Burkholderia orbicola (strain MC0-3).